Here is a 206-residue protein sequence, read N- to C-terminus: Ras-related protein Rab-18 (206 aa).

At Met-1 the chain carries N-acetylmethionine. GTP contacts are provided by Ser-17, Gly-20, Lys-21, Ser-22, Ser-23, Asp-34, Pro-35, Thr-40, Gly-66, Lys-123, and Asp-125. Ser-22 lines the Mg(2+) pocket. 2 consecutive short sequence motifs (switch) follow at residues 31–45 (DTFD…GVDF) and 63–80 (DTAG…YYRG). A Mg(2+)-binding site is contributed by Thr-40. Ser-144 is modified (phosphoserine). Ala-152 serves as a coordination point for GTP. Cys-199 is lipidated: S-palmitoyl cysteine. Cys-203 bears the Cysteine methyl ester mark. A lipid anchor (S-geranylgeranyl cysteine) is attached at Cys-203. The propeptide at 204-206 (SVL) is removed in mature form.

This sequence belongs to the small GTPase superfamily. Rab family. As to quaternary structure, interacts (in GTP-bound form) with ZFYVE1. Interacts with ZW10 and this interaction is enhanced in the presence of ZFYVE1. Interacts with BSCL2. In terms of assembly, (Microbial infection) Interacts with Hepatitis C virus (HCV) non-structural protein 5A; this interaction may promote the association of NS5A and other viral replicase components with lipid droplets. It depends on Mg(2+) as a cofactor. Ubiquitous.

Its subcellular location is the endoplasmic reticulum membrane. It localises to the golgi apparatus. It is found in the cis-Golgi network membrane. The protein localises to the lipid droplet. The protein resides in the apical cell membrane. The catalysed reaction is GTP + H2O = GDP + phosphate + H(+). With respect to regulation, regulated by guanine nucleotide exchange factor (GEF) RAB3GAP1-RAB3GAP2 complex at the cis-Golgi membrane which promotes the exchange of bound GDP for free GTP. Regulated by GTPase activating protein (GAP) TBC1D20 at the ER membrane which increases the GTP hydrolysis activity. Inhibited by GDP dissociation inhibitors (GDIs) which prevent Rab-GDP dissociation. In terms of biological role, the small GTPases Rab are key regulators of intracellular membrane trafficking, from the formation of transport vesicles to their fusion with membranes. Rabs cycle between an inactive GDP-bound form and an active GTP-bound form that is able to recruit to membranes different sets of downstream effectors directly responsible for vesicle formation, movement, tethering and fusion. RAB18 is required for the localization of ZFYVE1 to lipid droplets and for its function in mediating the formation of endoplasmic reticulum-lipid droplets (ER-LD) contacts. Also required for maintaining endoplasmic reticulum structure. Plays a role in apical endocytosis/recycling. Plays a key role in eye and brain development and neurodegeneration. This chain is Ras-related protein Rab-18, found in Homo sapiens (Human).